Consider the following 586-residue polypeptide: MDPGTLSLFQRVSTKLGWDRDGGLDDAEEKLRKSLKKTRRPALASSDSSTGPAQRLELSDSDNSSGKENRSQEEHILLTSDDEDFEKFLASKATPKSTFKQSASSAQKPREPVPVLSSESDNEFELFLNRVKTPKAKVQPQSMSSSDESLKHFIVDSMSSDDDFVTEKKPSIYKGKAKTVKTPKSVQKTKKPAPSLCNSPVFLSDSDDDCNIVIKSTWRTRHSRPPSDEHQATSKDREETEKPRVPQPTITVKSHTSRDDTCSSEEEFQSLLDRVRQNLGGRTSASPMPSAEPKPQRPCLSTPSATGRKTGSQVPVKDSPVIHTPVQQMPSSRPVLSHTEPRALPNSRVVVCKTPGCFLQSLSAPGSVYCRSFKQNKDELTSKLYQLYNTSVFDSQLPVDMSVTWNNKMRKTAGYCISGQERGTGKRYARIELSVKVCDSADRLRDTLIHEMCHAATWLINNVRDGHGPFWRLYARKAMLAHPELPMVSRCHSYDINYKFQYQCNRCKNTIGRHSKSLDTTKFVCALCTGQLVLLTPSKPRAPTPFATFVKENYGSTKQELTGQSHAEIMRKLSADFASKTRLSQS.

4 disordered regions span residues 17–119, 176–202, 217–266, and 279–318; these read GWDR…LSSE, KAKT…SPVF, TWRT…SSEE, and LGGR…PVKD. Residues 65–76 show a composition bias toward basic and acidic residues; sequence SGKENRSQEEHI. Residues 94 to 107 are compositionally biased toward polar residues; it reads TPKSTFKQSASSAQ. Basic residues predominate over residues 176-191; sequence KAKTVKTPKSVQKTKK. Residues 225 to 244 show a composition bias toward basic and acidic residues; sequence PPSDEHQATSKDREETEKPR. The segment covering 299–313 has biased composition (polar residues); that stretch reads CLSTPSATGRKTGSQ. The SprT-like domain occupies 383–482; the sequence is KLYQLYNTSV…LYARKAMLAH (100 aa).

The protein belongs to the serine-aspartate repeat-containing protein (SDr) family.

It localises to the nucleus. The protein resides in the PML body. Its subcellular location is the chromosome. In terms of biological role, may play a role in DNA-protein cross-links (DPCs) clearance, ensuring the genomic stability by protecting germ cells and early embryos from various sources of damage. This is Germ cell nuclear acidic protein (gcna) from Danio rerio (Zebrafish).